Consider the following 139-residue polypeptide: MTVIDANGLIMGRLASNVAKMLLSGEEVSIVNAERAVISGSKVTTFEEYDVIRNMGTREFGPYFPRRPDRILKRTVRGMLPYKRARGKDAMGRLKVYVGIPYEYQDAEFVSVEGAEMTRLSSNKYVTIGDVSRQLGSKF.

Belongs to the universal ribosomal protein uL13 family. In terms of assembly, part of the 50S ribosomal subunit.

This protein is one of the early assembly proteins of the 50S ribosomal subunit, although it is not seen to bind rRNA by itself. It is important during the early stages of 50S assembly. The protein is Large ribosomal subunit protein uL13 of Methanococcoides burtonii (strain DSM 6242 / NBRC 107633 / OCM 468 / ACE-M).